Consider the following 159-residue polypeptide: D-aminoacyl-tRNA deacylase (159 aa).

The short motif at 146-147 (GP) is the Gly-cisPro motif, important for rejection of L-amino acids element.

The protein belongs to the DTD family. As to quaternary structure, homodimer.

It is found in the cytoplasm. It catalyses the reaction glycyl-tRNA(Ala) + H2O = tRNA(Ala) + glycine + H(+). It carries out the reaction a D-aminoacyl-tRNA + H2O = a tRNA + a D-alpha-amino acid + H(+). Its function is as follows. An aminoacyl-tRNA editing enzyme that deacylates mischarged D-aminoacyl-tRNAs. Also deacylates mischarged glycyl-tRNA(Ala), protecting cells against glycine mischarging by AlaRS. Acts via tRNA-based rather than protein-based catalysis; rejects L-amino acids rather than detecting D-amino acids in the active site. By recycling D-aminoacyl-tRNA to D-amino acids and free tRNA molecules, this enzyme counteracts the toxicity associated with the formation of D-aminoacyl-tRNA entities in vivo and helps enforce protein L-homochirality. The chain is D-aminoacyl-tRNA deacylase from Bifidobacterium adolescentis (strain ATCC 15703 / DSM 20083 / NCTC 11814 / E194a).